The sequence spans 306 residues: Ribonuclease Z (306 aa).

7 residues coordinate Zn(2+): H63, H65, D67, H68, H140, D211, and H269. D67 serves as the catalytic Proton acceptor.

The protein belongs to the RNase Z family. In terms of assembly, homodimer. Zn(2+) serves as cofactor.

It carries out the reaction Endonucleolytic cleavage of RNA, removing extra 3' nucleotides from tRNA precursor, generating 3' termini of tRNAs. A 3'-hydroxy group is left at the tRNA terminus and a 5'-phosphoryl group is left at the trailer molecule.. Its function is as follows. Zinc phosphodiesterase, which displays some tRNA 3'-processing endonuclease activity. Probably involved in tRNA maturation, by removing a 3'-trailer from precursor tRNA. The polypeptide is Ribonuclease Z (Listeria monocytogenes serotype 4a (strain HCC23)).